Reading from the N-terminus, the 906-residue chain is Alanine--tRNA ligase (906 aa).

The Zn(2+) site is built by histidine 600, histidine 604, cysteine 703, and histidine 707.

It belongs to the class-II aminoacyl-tRNA synthetase family. Homodimer. Zn(2+) serves as cofactor.

It localises to the cytoplasm. The catalysed reaction is tRNA(Ala) + L-alanine + ATP = L-alanyl-tRNA(Ala) + AMP + diphosphate. Its function is as follows. Catalyzes the attachment of alanine to tRNA(Ala) in a two-step reaction: alanine is first activated by ATP to form Ala-AMP and then transferred to the acceptor end of tRNA(Ala). Incorrectly charged aminoacyl-tRNA(Ala) is also edited in situ by the editing domain. This chain is Alanine--tRNA ligase (alaS), found in Archaeoglobus fulgidus (strain ATCC 49558 / DSM 4304 / JCM 9628 / NBRC 100126 / VC-16).